Reading from the N-terminus, the 504-residue chain is MEQYQAYLELRRSRYQDILYPLFFRESIYGLAYGHESFFTENVDYNNKFSLLIXQRXSTRMYQQTHFSLCANDSNKNTFVGYNYNFDSQIILEGFGVVVEILFSLQLFISSLRGLEIVKSYQNLQSIHSIFPFFEDKLIYLNHKSDIRIPYPIHLEIXXXXXXXXXXXXXFFHLIRLFFYYYYNWNSLFPPKKRISTFFSKRNLRIFLFLYNLYVWEYESIFLFLRNKCSQLQLKHFLVFFERIFFYEKRKHLVEVSTKTCSYTLFFFKDTFIHYVRYKGKSILVLKNTPLLINKWKYYFIYLWQCHFDIWAGPGTIYINQLSQXSFHFLGYFLSXXXXXXXXXXXXXXXXXXXXXXXXXXXXXXXXXXXXXXXXXXXXXXXXXXXXXXXXXANFSDFDILDRFLRICRNFSHYYNGSAKKKSFYQIKYILRFSCIKTLARKHKSTVRTFLKKLSSEKLLEEFFTEEDLFSLIFPRTSFTLRGVYRGRIWYLDIFFRNDFVNHF.

It belongs to the intron maturase 2 family. MatK subfamily.

Its subcellular location is the plastid. The protein resides in the chloroplast. In terms of biological role, usually encoded in the trnK tRNA gene intron. Probably assists in splicing its own and other chloroplast group II introns. The sequence is that of Maturase K from Lablab purpureus (Hyacinth bean).